The sequence spans 295 residues: uncharacterized protein (295 aa).

Residues 8 to 106 enclose the HTH araC/xylS-type domain; that stretch reads QKTINWIESH…HMPPGAYRTF (99 aa). The H-T-H motif DNA-binding region spans 25 to 46; that stretch reads EDIVNVSSFSKFHFHRIFQKEV.

Probable transcriptional regulator. This is an uncharacterized protein from Bacillus subtilis (strain 168).